A 207-amino-acid polypeptide reads, in one-letter code: Phenazine biosynthesis protein PhzD1 (207 aa).

Asp-38 acts as the Proton donor in catalysis. Residues Gln-78, Arg-87, Lys-122, and 151–155 (YAHVG) contribute to the substrate site.

It belongs to the isochorismatase family. In terms of assembly, homodimer.

It catalyses the reaction (2S)-2-amino-4-deoxychorismate + H2O = (5S,6S)-6-amino-5-hydroxycyclohexa-1,3-diene-1-carboxyate + pyruvate. It functions in the pathway antibiotic biosynthesis; phenazine biosynthesis. In terms of biological role, involved in the biosynthesis of the antibiotic phenazine, a nitrogen-containing heterocyclic molecule. PhzD1 (operon phzA1B1C1E1F1G1) has a role in the biosynthesis of the phenazine during planktonic growth. Catalyzes the hydrolysis of the vinyl ether functional group of 2-amino-2-deoxyisochorismate (ADIC), yielding pyruvate and trans-2,3-dihydro-3-hydroxyanthranilic acid (DHHA). Also able to act on isochorismate, chorismate and 4-amino-4-deoxychorismate (ADC) as substrates. This Pseudomonas aeruginosa (strain ATCC 15692 / DSM 22644 / CIP 104116 / JCM 14847 / LMG 12228 / 1C / PRS 101 / PAO1) protein is Phenazine biosynthesis protein PhzD1.